Here is a 61-residue protein sequence, read N- to C-terminus: Small ribosomal subunit protein uS14 (61 aa).

Residues C24, C27, C40, and C43 each contribute to the Zn(2+) site.

The protein belongs to the universal ribosomal protein uS14 family. Zinc-binding uS14 subfamily. As to quaternary structure, part of the 30S ribosomal subunit. Contacts proteins S3 and S10. Zn(2+) serves as cofactor.

Functionally, binds 16S rRNA, required for the assembly of 30S particles and may also be responsible for determining the conformation of the 16S rRNA at the A site. This is Small ribosomal subunit protein uS14 from Bacillus anthracis (strain A0248).